The following is a 207-amino-acid chain: Uridine kinase (207 aa).

11-18 (GGSGSGKT) lines the ATP pocket.

It belongs to the uridine kinase family.

The protein resides in the cytoplasm. The enzyme catalyses uridine + ATP = UMP + ADP + H(+). It carries out the reaction cytidine + ATP = CMP + ADP + H(+). It functions in the pathway pyrimidine metabolism; CTP biosynthesis via salvage pathway; CTP from cytidine: step 1/3. It participates in pyrimidine metabolism; UMP biosynthesis via salvage pathway; UMP from uridine: step 1/1. In Staphylococcus aureus (strain Mu3 / ATCC 700698), this protein is Uridine kinase.